Consider the following 99-residue polypeptide: Protein Tat (99 aa).

Residues 1-24 (MDPVDPKLEPWNHPGSQPQTACNN) form an interaction with human CREBBP region. Residues 1–48 (MDPVDPKLEPWNHPGSQPQTACNNCYCKKCCYHCQMCFLKKGLGISYG) form a transactivation region. Cysteine 22, cysteine 25, and cysteine 27 together coordinate Zn(2+). The cysteine-rich stretch occupies residues 22 to 37 (CNNCYCKKCCYHCQMC). Lysine 28 is subject to N6-acetyllysine; by host PCAF. Zn(2+) contacts are provided by cysteine 30, histidine 33, cysteine 34, and cysteine 37. A core region spans residues 38–48 (FLKKGLGISYG). A compositionally biased stretch (basic residues) spans 48 to 58 (GRKKRSQRHRT). Residues 48-99 (GRKKRSQRHRTPASLQDHQNSISKQPLSRTHGDPTGPKEQKKEVASKTETDP) form a disordered region. The Nuclear localization signal, RNA-binding (TAR), and protein transduction motif lies at 49-57 (RKKRSQRHR). Positions 49–86 (RKKRSQRHRTPASLQDHQNSISKQPLSRTHGDPTGPKE) are interaction with the host capping enzyme RNGTT. An N6-acetyllysine; by host EP300 and GCN5L2 mark is found at lysine 50 and lysine 51. Residue arginine 52 is modified to Asymmetric dimethylarginine; by host PRMT6. Over residues 60–75 (ASLQDHQNSISKQPLS) the composition is skewed to polar residues. A Glycyl lysine isopeptide (Lys-Gly) (interchain with G-Cter in ubiquitin) cross-link involves residue lysine 71. Basic and acidic residues predominate over residues 77–99 (THGDPTGPKEQKKEVASKTETDP).

This sequence belongs to the lentiviruses Tat family. Interacts with host CCNT1. Associates with the P-TEFb complex composed at least of Tat, P-TEFb (CDK9 and CCNT1), TAR RNA, RNA Pol II. Recruits the HATs CREBBP, TAF1/TFIID, EP300, PCAF and GCN5L2. Interacts with host KAT5/Tip60; this interaction targets the latter to degradation. Interacts with the host deacetylase SIRT1. Interacts with host capping enzyme RNGTT; this interaction stimulates RNGTT. Binds to host KDR, and to the host integrins ITGAV/ITGB3 and ITGA5/ITGB1. Interacts with host KPNB1/importin beta-1 without previous binding to KPNA1/importin alpha-1. Interacts with EIF2AK2. Interacts with host nucleosome assembly protein NAP1L1; this interaction may be required for the transport of Tat within the nucleus, since the two proteins interact at the nuclear rim. Interacts with host C1QBP/SF2P32; this interaction involves lysine-acetylated Tat. Interacts with the host chemokine receptors CCR2, CCR3 and CXCR4. Interacts with host DPP4/CD26; this interaction may trigger an anti-proliferative effect. Interacts with host LDLR. Interacts with the host extracellular matrix metalloproteinase MMP1. Interacts with host PRMT6; this interaction mediates Tat's methylation. Interacts with, and is ubiquitinated by MDM2/Hdm2. Interacts with host PSMC3 and HTATIP2. Interacts with STAB1; this interaction may overcome SATB1-mediated repression of IL2 and IL2RA (interleukin) in T cells by binding to the same domain than HDAC1. Interacts (when acetylated) with human CDK13, thereby increasing HIV-1 mRNA splicing and promoting the production of the doubly spliced HIV-1 protein Nef. Interacts with host TBP; this interaction modulates the activity of transcriptional pre-initiation complex. Interacts with host RELA. Interacts with host PLSCR1; this interaction negatively regulates Tat transactivation activity by altering its subcellular distribution. In terms of processing, asymmetrical arginine methylation by host PRMT6 seems to diminish the transactivation capacity of Tat and affects the interaction with host CCNT1. Acetylation by EP300, CREBBP, GCN5L2/GCN5 and PCAF regulates the transactivation activity of Tat. EP300-mediated acetylation of Lys-50 promotes dissociation of Tat from the TAR RNA through the competitive binding to PCAF's bromodomain. In addition, the non-acetylated Tat's N-terminus can also interact with PCAF. PCAF-mediated acetylation of Lys-28 enhances Tat's binding to CCNT1. Lys-50 is deacetylated by SIRT1. Post-translationally, polyubiquitination by host MDM2 does not target Tat to degradation, but activates its transactivation function and fosters interaction with CCNT1 and TAR RNA. In terms of processing, phosphorylated by EIF2AK2 on serine and threonine residues adjacent to the basic region important for TAR RNA binding and function. Phosphorylation of Tat by EIF2AK2 is dependent on the prior activation of EIF2AK2 by dsRNA.

It localises to the host nucleus. Its subcellular location is the host nucleolus. It is found in the host cytoplasm. The protein localises to the secreted. Its function is as follows. Transcriptional activator that increases RNA Pol II processivity, thereby increasing the level of full-length viral transcripts. Recognizes a hairpin structure at the 5'-LTR of the nascent viral mRNAs referred to as the transactivation responsive RNA element (TAR) and recruits the cyclin T1-CDK9 complex (P-TEFb complex) that will in turn hyperphosphorylate the RNA polymerase II to allow efficient elongation. The CDK9 component of P-TEFb and other Tat-activated kinases hyperphosphorylate the C-terminus of RNA Pol II that becomes stabilized and much more processive. Other factors such as HTATSF1/Tat-SF1, SUPT5H/SPT5, and HTATIP2 are also important for Tat's function. Besides its effect on RNA Pol II processivity, Tat induces chromatin remodeling of proviral genes by recruiting the histone acetyltransferases (HATs) CREBBP, EP300 and PCAF to the chromatin. This also contributes to the increase in proviral transcription rate, especially when the provirus integrates in transcriptionally silent region of the host genome. To ensure maximal activation of the LTR, Tat mediates nuclear translocation of NF-kappa-B by interacting with host RELA. Through its interaction with host TBP, Tat may also modulate transcription initiation. Tat can reactivate a latently infected cell by penetrating in it and transactivating its LTR promoter. In the cytoplasm, Tat is thought to act as a translational activator of HIV-1 mRNAs. Functionally, extracellular circulating Tat can be endocytosed by surrounding uninfected cells via the binding to several surface receptors such as CD26, CXCR4, heparan sulfate proteoglycans (HSPG) or LDLR. Neurons are rarely infected, but they internalize Tat via their LDLR. Through its interaction with nuclear HATs, Tat is potentially able to control the acetylation-dependent cellular gene expression. Modulates the expression of many cellular genes involved in cell survival, proliferation or in coding for cytokines or cytokine receptors. Tat plays a role in T-cell and neurons apoptosis. Tat induced neurotoxicity and apoptosis probably contribute to neuroAIDS. Circulating Tat also acts as a chemokine-like and/or growth factor-like molecule that binds to specific receptors on the surface of the cells, affecting many cellular pathways. In the vascular system, Tat binds to ITGAV/ITGB3 and ITGA5/ITGB1 integrins dimers at the surface of endothelial cells and competes with bFGF for heparin-binding sites, leading to an excess of soluble bFGF. This chain is Protein Tat, found in Homo sapiens (Human).